The following is a 197-amino-acid chain: RNA pyrophosphohydrolase (197 aa).

Residues 6–154 (GYRPNVGIVL…KREVYQLALS (149 aa)) form the Nudix hydrolase domain. Positions 38–59 (GGIQHGESPEQAMYRELHEEVG) match the Nudix box motif.

Belongs to the Nudix hydrolase family. RppH subfamily. Requires a divalent metal cation as cofactor.

In terms of biological role, accelerates the degradation of transcripts by removing pyrophosphate from the 5'-end of triphosphorylated RNA, leading to a more labile monophosphorylated state that can stimulate subsequent ribonuclease cleavage. In Polynucleobacter necessarius subsp. necessarius (strain STIR1), this protein is RNA pyrophosphohydrolase.